Here is a 220-residue protein sequence, read N- to C-terminus: Putative cobalt transport protein CbiM (220 aa).

6 consecutive transmembrane segments (helical) span residues 6-26 (GFLP…VISY), 45-65 (IAVA…SVTG), 74-94 (GIAV…IVLL), 107-127 (TLGA…WVVF), 153-173 (LVTS…AGVV), and 188-208 (IPIG…IAMS).

This sequence belongs to the CbiM family. Forms an energy-coupling factor (ECF) transporter complex composed of an ATP-binding protein (A component, CbiO), a transmembrane protein (T component, CbiQ) and 2 possible substrate-capture proteins (S components, CbiM and CbiN) of unknown stoichimetry.

Its subcellular location is the cell membrane. The protein operates within cofactor biosynthesis; adenosylcobalamin biosynthesis. Its function is as follows. Part of the energy-coupling factor (ECF) transporter complex CbiMNOQ involved in cobalt import. This is Putative cobalt transport protein CbiM from Halobacterium salinarum (strain ATCC 29341 / DSM 671 / R1).